Consider the following 432-residue polypeptide: Homogentisate 1,2-dioxygenase (432 aa).

The active-site Proton acceptor is His287. Fe cation is bound by residues His330 and Glu336. 2 residues coordinate homogentisate: Tyr345 and His366. His366 serves as a coordination point for Fe cation.

This sequence belongs to the homogentisate dioxygenase family. Hexamer; dimer of trimers. It depends on Fe cation as a cofactor.

It catalyses the reaction homogentisate + O2 = 4-maleylacetoacetate + H(+). The protein operates within amino-acid degradation; L-phenylalanine degradation; acetoacetate and fumarate from L-phenylalanine: step 4/6. In terms of biological role, involved in the catabolism of homogentisate (2,5-dihydroxyphenylacetate or 2,5-OH-PhAc), a central intermediate in the degradation of phenylalanine and tyrosine. Catalyzes the oxidative ring cleavage of the aromatic ring of homogentisate to yield maleylacetoacetate. This is Homogentisate 1,2-dioxygenase from Pseudomonas aeruginosa (strain ATCC 15692 / DSM 22644 / CIP 104116 / JCM 14847 / LMG 12228 / 1C / PRS 101 / PAO1).